The chain runs to 322 residues: Sideroflexin-1 (322 aa).

At S2 the chain carries N-acetylserine. Over S2 to T102 the chain is Mitochondrial matrix. A helical transmembrane segment spans residues I103–W120. Residues Q121–E146 are Mitochondrial intermembrane-facing. Residues L147–A167 form a helical membrane-spanning segment. Over L168–P174 the chain is Mitochondrial matrix. The helical transmembrane segment at L175 to L195 threads the bilayer. Over M196 to Q228 the chain is Mitochondrial intermembrane. Residues V229 to N249 form a helical membrane-spanning segment. The Mitochondrial matrix segment spans residues T250–P266. Residues V267–F287 form a helical membrane-spanning segment. Topologically, residues P288 to L322 are mitochondrial intermembrane.

It belongs to the sideroflexin family.

It is found in the mitochondrion inner membrane. The enzyme catalyses L-serine(in) = L-serine(out). The catalysed reaction is L-alanine(in) = L-alanine(out). It carries out the reaction L-cysteine(in) = L-cysteine(out). Functionally, amino acid transporter importing serine, an essential substrate of the mitochondrial branch of the one-carbon pathway, into mitochondria. Mitochondrial serine is then converted to glycine and formate, which exits to the cytosol where it is used to generate the charged folates that serve as one-carbon donors. May also transport other amino acids including alanine and cysteine. The chain is Sideroflexin-1 (SFXN1) from Ovis aries (Sheep).